The sequence spans 447 residues: Sensor protein VanSB (447 aa).

2 helical membrane-spanning segments follow: residues 10-30 (VFSY…TLFA) and 137-155 (GIVM…AYIF). The HAMP domain occupies 157–208 (RQMTTPIKALADSANKMANLKEVPPPLERKDELGALAHDMHSMYIRLKETIA). The Histidine kinase domain occupies 230-445 (AASHELKTPI…LFWLDLPPTS (216 aa)). His233 carries the phosphohistidine; by autocatalysis modification.

The protein resides in the cell membrane. It carries out the reaction ATP + protein L-histidine = ADP + protein N-phospho-L-histidine.. Member of the two-component regulatory system VanSB/VanRB. Activates the transcription of vanSB, vanYB and vanW in response to vancomycin which results in vancomycin resistance. VanSB may activate VanRB by phosphorylation. May also act as a phospho-VanRB phosphatase. This chain is Sensor protein VanSB (vanSB), found in Enterococcus faecalis (strain ATCC 700802 / V583).